The chain runs to 465 residues: Neuraminidase (465 aa).

The Intravirion portion of the chain corresponds to 1–11; the sequence is MLPSTIQTLTL. A helical transmembrane segment spans residues 12–34; that stretch reads FLTSGGVLLSLYVSASLSYLLYS. The tract at residues 13 to 35 is involved in apical transport and lipid raft association; it reads LTSGGVLLSLYVSASLSYLLYSD. At 35–465 the chain is on the virion surface side; sequence DILLRFSSKI…DTVTGVDMAL (431 aa). A hypervariable stalk region region spans residues 38–85; that stretch reads LRFSSKITAPTMTLDCANASNVQAVNRSATKEMTFLLPEPEWTYPRLS. Residues asparagine 55 and asparagine 63 are each glycosylated (N-linked (GlcNAc...) asparagine; by host). 8 disulfide bridges follow: cysteine 86–cysteine 419, cysteine 121–cysteine 126, cysteine 181–cysteine 228, cysteine 230–cysteine 235, cysteine 276–cysteine 290, cysteine 278–cysteine 288, cysteine 317–cysteine 336, and cysteine 423–cysteine 446. Residues 88–465 are head of neuraminidase; that stretch reads GSTFQKALLI…DTVTGVDMAL (378 aa). Arginine 115 lines the substrate pocket. N-linked (GlcNAc...) asparagine; by host glycosylation is present at asparagine 143. Catalysis depends on aspartate 148, which acts as the Proton donor/acceptor. Arginine 149 contacts substrate. 274–275 lines the substrate pocket; it reads EE. An N-linked (GlcNAc...) asparagine; by host glycan is attached at asparagine 283. Arginine 291 is a binding site for substrate. Ca(2+) contacts are provided by aspartate 292 and aspartate 323. The disordered stretch occupies residues 328–347; it reads DDGSITGPCESDGDKGRGGI. Residue arginine 373 participates in substrate binding. Catalysis depends on tyrosine 408, which acts as the Nucleophile.

The protein belongs to the glycosyl hydrolase 34 family. Homotetramer. Ca(2+) serves as cofactor. Post-translationally, N-glycosylated.

The protein localises to the virion membrane. The protein resides in the host apical cell membrane. It carries out the reaction Hydrolysis of alpha-(2-&gt;3)-, alpha-(2-&gt;6)-, alpha-(2-&gt;8)- glycosidic linkages of terminal sialic acid residues in oligosaccharides, glycoproteins, glycolipids, colominic acid and synthetic substrates.. Its activity is regulated as follows. Inhibited by the neuraminidase inhibitors zanamivir (Relenza) and oseltamivir (Tamiflu). These drugs interfere with the release of progeny virus from infected cells and are effective against all influenza strains. Resistance to neuraminidase inhibitors is quite rare. Catalyzes the removal of terminal sialic acid residues from viral and cellular glycoconjugates. Cleaves off the terminal sialic acids on the glycosylated HA during virus budding to facilitate virus release. Additionally helps virus spread through the circulation by further removing sialic acids from the cell surface. These cleavages prevent self-aggregation and ensure the efficient spread of the progeny virus from cell to cell. Otherwise, infection would be limited to one round of replication. Described as a receptor-destroying enzyme because it cleaves a terminal sialic acid from the cellular receptors. May facilitate viral invasion of the upper airways by cleaving the sialic acid moieties on the mucin of the airway epithelial cells. Likely to plays a role in the budding process through its association with lipid rafts during intracellular transport. May additionally display a raft-association independent effect on budding. Plays a role in the determination of host range restriction on replication and virulence. Sialidase activity in late endosome/lysosome traffic seems to enhance virus replication. In Influenza B virus (strain B/Memphis/3/1989), this protein is Neuraminidase.